The primary structure comprises 96 residues: Protein TraA (96 aa).

This is Protein TraA (traA) from Escherichia coli.